The chain runs to 322 residues: HPr kinase/phosphorylase (322 aa).

Catalysis depends on residues H146 and K167. An ATP-binding site is contributed by 161 to 168 (GDSGLGKS). S168 contacts Mg(2+). D185 functions as the Proton acceptor; for phosphorylation activity. Proton donor; for dephosphorylation activity in the catalytic mechanism. An important for the catalytic mechanism of both phosphorylation and dephosphorylation region spans residues 209–218 (LEVRGLGLLD). E210 provides a ligand contact to Mg(2+). The active site involves R250. An important for the catalytic mechanism of dephosphorylation region spans residues 271–276 (QVAAGR).

This sequence belongs to the HPrK/P family. As to quaternary structure, homohexamer. Mg(2+) serves as cofactor.

It catalyses the reaction [HPr protein]-L-serine + ATP = [HPr protein]-O-phospho-L-serine + ADP + H(+). The enzyme catalyses [HPr protein]-O-phospho-L-serine + phosphate + H(+) = [HPr protein]-L-serine + diphosphate. Catalyzes the ATP- as well as the pyrophosphate-dependent phosphorylation of a specific serine residue in HPr, a phosphocarrier protein of the phosphoenolpyruvate-dependent sugar phosphotransferase system (PTS). HprK/P also catalyzes the pyrophosphate-producing, inorganic phosphate-dependent dephosphorylation (phosphorolysis) of seryl-phosphorylated HPr (P-Ser-HPr). The protein is HPr kinase/phosphorylase of Burkholderia lata (strain ATCC 17760 / DSM 23089 / LMG 22485 / NCIMB 9086 / R18194 / 383).